Consider the following 245-residue polypeptide: Phosphoadenosine 5'-phosphosulfate reductase (245 aa).

Catalysis depends on Cys239, which acts as the Nucleophile; cysteine thiosulfonate intermediate.

This sequence belongs to the PAPS reductase family. CysH subfamily.

Its subcellular location is the cytoplasm. The enzyme catalyses [thioredoxin]-disulfide + sulfite + adenosine 3',5'-bisphosphate + 2 H(+) = [thioredoxin]-dithiol + 3'-phosphoadenylyl sulfate. It participates in sulfur metabolism; hydrogen sulfide biosynthesis; sulfite from sulfate: step 3/3. Its function is as follows. Catalyzes the formation of sulfite from phosphoadenosine 5'-phosphosulfate (PAPS) using thioredoxin as an electron donor. In Shewanella oneidensis (strain ATCC 700550 / JCM 31522 / CIP 106686 / LMG 19005 / NCIMB 14063 / MR-1), this protein is Phosphoadenosine 5'-phosphosulfate reductase.